A 235-amino-acid chain; its full sequence is Ribonuclease 3 (235 aa).

Residues 6–135 (LISLEKILGF…VIGAVYFDCG (130 aa)) enclose the RNase III domain. Mg(2+) is bound at residue Glu48. Residue Asp52 is part of the active site. Asn121 and Glu124 together coordinate Mg(2+). Glu124 is an active-site residue. One can recognise a DRBM domain in the interval 162–231 (DEKTTLQELL…AKKALELLKN (70 aa)).

It belongs to the ribonuclease III family. Homodimer. Mg(2+) serves as cofactor.

The protein localises to the cytoplasm. The enzyme catalyses Endonucleolytic cleavage to 5'-phosphomonoester.. Digests double-stranded RNA. Involved in the processing of primary rRNA transcript to yield the immediate precursors to the large and small rRNAs (23S and 16S). Processes some mRNAs, and tRNAs when they are encoded in the rRNA operon. Processes pre-crRNA and tracrRNA of type II CRISPR loci if present in the organism. This Carboxydothermus hydrogenoformans (strain ATCC BAA-161 / DSM 6008 / Z-2901) protein is Ribonuclease 3.